The primary structure comprises 265 residues: 6-carboxyhexanoate--CoA ligase (265 aa).

Belongs to the BioW family. As to quaternary structure, homodimer. Mg(2+) is required as a cofactor.

It carries out the reaction heptanedioate + ATP + CoA = 6-carboxyhexanoyl-CoA + AMP + diphosphate. The protein operates within metabolic intermediate metabolism; pimeloyl-CoA biosynthesis; pimeloyl-CoA from pimelate: step 1/1. Catalyzes the transformation of pimelate into pimeloyl-CoA with concomitant hydrolysis of ATP to AMP. The polypeptide is 6-carboxyhexanoate--CoA ligase (Syntrophotalea carbinolica (strain DSM 2380 / NBRC 103641 / GraBd1) (Pelobacter carbinolicus)).